The chain runs to 209 residues: Ras-like protein (209 aa).

15–22 is a binding site for GTP; the sequence is GGGGEGKS. An Effector region motif is present at residues 37–45; sequence YDPTIEESY. Residues 62–66 and 121–124 contribute to the GTP site; these read DTAGQ and NKCD. Residues C202 and C203 are each lipidated (S-palmitoyl cysteine). A Cysteine methyl ester modification is found at C206. The S-geranylgeranyl cysteine moiety is linked to residue C206. The propeptide at 207–209 is removed in mature form; sequence IVM.

Belongs to the small GTPase superfamily. Ras family.

It localises to the cell membrane. It catalyses the reaction GTP + H2O = GDP + phosphate + H(+). Alternates between an inactive form bound to GDP and an active form bound to GTP. Activated by a guanine nucleotide-exchange factor (GEF) and inactivated by a GTPase-activating protein (GAP). The protein is Ras-like protein of Laccaria bicolor (Bicoloured deceiver).